A 336-amino-acid polypeptide reads, in one-letter code: Filaggrin (336 aa).

Residues 1-313 (PDGSGRSSNR…GVQGAAASGQ (313 aa)) form a disordered region. 3 stretches are compositionally biased toward low complexity: residues 16–26 (QLSPSQSSDSQ), 40–66 (SSSA…LAAD), and 73–98 (ARQG…SSSA). Composition is skewed to basic and acidic residues over residues 100–120 (RQGR…HSDF), 163–176 (DSQH…EQQR), and 184–195 (HQHEHEQPESGH). Residues 285–311 (AQRGQSSSANRRAGSSSGSGVQGAAAS) show a composition bias toward low complexity.

This sequence belongs to the S100-fused protein family. In terms of processing, filaggrin is initially synthesized as a large, insoluble, highly phosphorylated precursor containing many tandem copies of 248 AA, which are not separated by large linker sequences. During terminal differentiation it is dephosphorylated and proteolytically cleaved. In terms of tissue distribution, expressed in the granular layer of the epidermis (at protein level). Expressed in the epidermis of the ear (at protein level).

Its subcellular location is the cytoplasmic granule. Aggregates keratin intermediate filaments and promotes disulfide-bond formation among the intermediate filaments during terminal differentiation of mammalian epidermis. In Mus musculus (Mouse), this protein is Filaggrin (Flg).